The primary structure comprises 164 residues: uncharacterized protein (164 aa).

Its subcellular location is the mitochondrion. This is an uncharacterized protein from Arabidopsis thaliana (Mouse-ear cress).